The primary structure comprises 338 residues: Phosphate acyltransferase (338 aa).

The protein belongs to the PlsX family. In terms of assembly, homodimer. Probably interacts with PlsY.

Its subcellular location is the cytoplasm. The catalysed reaction is a fatty acyl-[ACP] + phosphate = an acyl phosphate + holo-[ACP]. The protein operates within lipid metabolism; phospholipid metabolism. Functionally, catalyzes the reversible formation of acyl-phosphate (acyl-PO(4)) from acyl-[acyl-carrier-protein] (acyl-ACP). This enzyme utilizes acyl-ACP as fatty acyl donor, but not acyl-CoA. This Alcanivorax borkumensis (strain ATCC 700651 / DSM 11573 / NCIMB 13689 / SK2) protein is Phosphate acyltransferase.